Reading from the N-terminus, the 186-residue chain is Peptidyl-tRNA hydrolase (186 aa).

Y16 is a tRNA binding site. H21 functions as the Proton acceptor in the catalytic mechanism. TRNA contacts are provided by Y66, N68, and N114.

It belongs to the PTH family. Monomer.

It localises to the cytoplasm. It catalyses the reaction an N-acyl-L-alpha-aminoacyl-tRNA + H2O = an N-acyl-L-amino acid + a tRNA + H(+). In terms of biological role, hydrolyzes ribosome-free peptidyl-tRNAs (with 1 or more amino acids incorporated), which drop off the ribosome during protein synthesis, or as a result of ribosome stalling. Functionally, catalyzes the release of premature peptidyl moieties from peptidyl-tRNA molecules trapped in stalled 50S ribosomal subunits, and thus maintains levels of free tRNAs and 50S ribosomes. This chain is Peptidyl-tRNA hydrolase, found in Ureaplasma urealyticum serovar 10 (strain ATCC 33699 / Western).